Consider the following 117-residue polypeptide: Large ribosomal subunit protein bL20 (117 aa).

Belongs to the bacterial ribosomal protein bL20 family.

Binds directly to 23S ribosomal RNA and is necessary for the in vitro assembly process of the 50S ribosomal subunit. It is not involved in the protein synthesizing functions of that subunit. This is Large ribosomal subunit protein bL20 from Oleidesulfovibrio alaskensis (strain ATCC BAA-1058 / DSM 17464 / G20) (Desulfovibrio alaskensis).